We begin with the raw amino-acid sequence, 416 residues long: Serine hydroxymethyltransferase (416 aa).

Residues Leu119 and Gly123–Leu125 contribute to the (6S)-5,6,7,8-tetrahydrofolate site. Lys228 carries the post-translational modification N6-(pyridoxal phosphate)lysine.

This sequence belongs to the SHMT family. In terms of assembly, homodimer. It depends on pyridoxal 5'-phosphate as a cofactor.

It localises to the cytoplasm. It catalyses the reaction (6R)-5,10-methylene-5,6,7,8-tetrahydrofolate + glycine + H2O = (6S)-5,6,7,8-tetrahydrofolate + L-serine. The protein operates within one-carbon metabolism; tetrahydrofolate interconversion. It participates in amino-acid biosynthesis; glycine biosynthesis; glycine from L-serine: step 1/1. Catalyzes the reversible interconversion of serine and glycine with tetrahydrofolate (THF) serving as the one-carbon carrier. This reaction serves as the major source of one-carbon groups required for the biosynthesis of purines, thymidylate, methionine, and other important biomolecules. Also exhibits THF-independent aldolase activity toward beta-hydroxyamino acids, producing glycine and aldehydes, via a retro-aldol mechanism. The sequence is that of Serine hydroxymethyltransferase from Moorella thermoacetica (strain ATCC 39073 / JCM 9320).